Here is a 134-residue protein sequence, read N- to C-terminus: Probable glycine cleavage system H protein (134 aa).

The Lipoyl-binding domain maps to 29-110; that stretch reads TVLVGITDYA…PYEAWIAKIK (82 aa). Lysine 70 is modified (N6-lipoyllysine).

It belongs to the GcvH family. In terms of assembly, the glycine cleavage system is composed of four proteins: P, T, L and H. (R)-lipoate is required as a cofactor.

The glycine cleavage system catalyzes the degradation of glycine. The H protein shuttles the methylamine group of glycine from the P protein to the T protein. The protein is Probable glycine cleavage system H protein of Pyrococcus furiosus (strain ATCC 43587 / DSM 3638 / JCM 8422 / Vc1).